Here is a 184-residue protein sequence, read N- to C-terminus: MYKHPDEEWLDEIPGQQENEDDDEIIWVSKSEIKRDAEALKALGAELVDLGKNALDRIPLDEDLRAAIELAQRIKKEGRRRQLQLIGKLLRQRDPEPIQTALDKLKNRHNQQVALFHKLEQLRDRLISDGDEAISEVLNLYPHADRQQLRALIRNAKKERDGNKPPKSARQIFQYLRTLAEAND.

The interval 1–21 (MYKHPDEEWLDEIPGQQENED) is disordered.

It belongs to the DarP family.

Its subcellular location is the cytoplasm. In terms of biological role, member of a network of 50S ribosomal subunit biogenesis factors which assembles along the 30S-50S interface, preventing incorrect 23S rRNA structures from forming. Promotes peptidyl transferase center (PTC) maturation. This Edwardsiella ictaluri (strain 93-146) protein is Dual-action ribosomal maturation protein DarP.